Here is a 184-residue protein sequence, read N- to C-terminus: Adenine phosphoribosyltransferase (184 aa).

It belongs to the purine/pyrimidine phosphoribosyltransferase family. In terms of assembly, homodimer.

The protein localises to the cytoplasm. The enzyme catalyses AMP + diphosphate = 5-phospho-alpha-D-ribose 1-diphosphate + adenine. The protein operates within purine metabolism; AMP biosynthesis via salvage pathway; AMP from adenine: step 1/1. Functionally, catalyzes a salvage reaction resulting in the formation of AMP, that is energically less costly than de novo synthesis. This chain is Adenine phosphoribosyltransferase, found in Blochmanniella pennsylvanica (strain BPEN).